Here is a 323-residue protein sequence, read N- to C-terminus: L-lactate dehydrogenase (323 aa).

Residues valine 11, aspartate 32, and tyrosine 63 each contribute to the NAD(+) site. Substrate-binding residues include glutamine 80 and arginine 86. NAD(+) contacts are provided by residues serine 99, 116-118 (VSN), and serine 141. 118–121 (NPVD) contributes to the substrate binding site. 146-149 (DTAR) provides a ligand contact to substrate. Beta-D-fructose 1,6-bisphosphate contacts are provided by arginine 151 and histidine 166. The active-site Proton acceptor is the histidine 173. A Phosphotyrosine modification is found at tyrosine 221. Threonine 230 lines the substrate pocket.

This sequence belongs to the LDH/MDH superfamily. LDH family. In terms of assembly, homotetramer.

It is found in the cytoplasm. It catalyses the reaction (S)-lactate + NAD(+) = pyruvate + NADH + H(+). It participates in fermentation; pyruvate fermentation to lactate; (S)-lactate from pyruvate: step 1/1. With respect to regulation, allosterically activated by fructose 1,6-bisphosphate (FBP). Functionally, catalyzes the conversion of lactate to pyruvate. The polypeptide is L-lactate dehydrogenase (Kosmotoga olearia (strain ATCC BAA-1733 / DSM 21960 / TBF 19.5.1)).